Here is a 24-residue protein sequence, read N- to C-terminus: U1-poneritoxin-Na1a (24 aa).

This sequence belongs to the non-disulfide-bridged peptide (NDBP) superfamily. Medium-length antimicrobial peptide (group 3) family. Ponericin-W subfamily. As to expression, expressed by the venom gland.

The protein resides in the secreted. It localises to the target cell membrane. Functionally, has a broad spectrum of activity against both Gram-positive and Gram-negative bacteria and S.cerevisiae. Has insecticidal and hemolytic activities. May act by disrupting the integrity of the bacterial cell membrane. The protein is U1-poneritoxin-Na1a of Neoponera apicalis (Ant).